The following is a 282-amino-acid chain: High mobility group nucleosome-binding domain-containing protein 5 (282 aa).

The tract at residues 1–282 is disordered; the sequence is MPKRKAAGQG…GKKEEPQSIV (282 aa). A Phosphothreonine modification is found at Thr31. Residues 37–46 are compositionally biased toward basic residues; that stretch reads KRTSSSRKMK. A Glycyl lysine isopeptide (Lys-Gly) (interchain with G-Cter in SUMO2) cross-link involves residue Lys67. Tyr76 bears the Phosphotyrosine mark. Residues 81–119 show a composition bias toward basic and acidic residues; sequence KNGEAKITEAPASEKEIVEVKEENIEDATEKGGEKKEAV. Phosphoserine is present on Ser93. Residue Lys101 forms a Glycyl lysine isopeptide (Lys-Gly) (interchain with G-Cter in SUMO1); alternate linkage. A Glycyl lysine isopeptide (Lys-Gly) (interchain with G-Cter in SUMO2); alternate cross-link involves residue Lys101. Lys124 participates in a covalent cross-link: Glycyl lysine isopeptide (Lys-Gly) (interchain with G-Cter in SUMO2). Positions 125-138 are enriched in acidic residues; that stretch reads NEEEDQKEDEEDQN. 2 stretches are compositionally biased toward basic and acidic residues: residues 139–152 and 158–256; these read EEKGEAGKEDKDEK and KEDK…KEDL. Acidic residues predominate over residues 257-270; sequence KEEEEGKEEDEIKE. Over residues 271-282 the composition is skewed to basic and acidic residues; sequence DDGKKEEPQSIV.

Belongs to the HMGN family. In terms of tissue distribution, ubiquitously expressed.

It is found in the nucleus. Functionally, preferentially binds to euchromatin and modulates cellular transcription by counteracting linker histone-mediated chromatin compaction. This is High mobility group nucleosome-binding domain-containing protein 5 (HMGN5) from Homo sapiens (Human).